Here is a 399-residue protein sequence, read N- to C-terminus: Secreted RxLR effector protein 36 (399 aa).

The signal sequence occupies residues 1-21 (MRGTIYVAIAILVAASSRSSA). A RxLR-dEER motif is present at residues 50-71 (RILRESRGSNDKLAVGAGDEER). Residue N75 is glycosylated (N-linked (GlcNAc...) asparagine). A disordered region spans residues 126–145 (IDPTPSNLGGQALHAPPNPD).

Belongs to the RxLR effector family.

The protein localises to the secreted. It is found in the host nucleus. In terms of biological role, secreted effector that completely suppresses the host cell death induced by cell death-inducing proteins. The sequence is that of Secreted RxLR effector protein 36 from Plasmopara viticola (Downy mildew of grapevine).